Here is a 642-residue protein sequence, read N- to C-terminus: Threonine--tRNA ligase (642 aa).

A TGS domain is found at M1–T61. A catalytic region spans residues D243 to P534. The Zn(2+) site is built by C334, H385, and H511.

It belongs to the class-II aminoacyl-tRNA synthetase family. As to quaternary structure, homodimer. Zn(2+) is required as a cofactor.

The protein resides in the cytoplasm. It carries out the reaction tRNA(Thr) + L-threonine + ATP = L-threonyl-tRNA(Thr) + AMP + diphosphate + H(+). Catalyzes the attachment of threonine to tRNA(Thr) in a two-step reaction: L-threonine is first activated by ATP to form Thr-AMP and then transferred to the acceptor end of tRNA(Thr). Also edits incorrectly charged L-seryl-tRNA(Thr). The sequence is that of Threonine--tRNA ligase from Shewanella putrefaciens (strain CN-32 / ATCC BAA-453).